Reading from the N-terminus, the 94-residue chain is uncharacterized protein (94 aa).

The segment covering 33–42 (INSLPTFTKP) has biased composition (polar residues). Residues 33–57 (INSLPTFTKPNDSNNNVNKSSNDGV) form a disordered region. Residues 43–57 (NDSNNNVNKSSNDGV) show a composition bias toward low complexity.

This is an uncharacterized protein from Dictyostelium discoideum (Social amoeba).